The following is a 138-amino-acid chain: uncharacterized protein (138 aa).

The N-terminal stretch at 1 to 37 (MNSTFTSQPLLNRSEPRVFKEFYRLVIGCNPAWQVMA) is a signal peptide.

To H.influenzae HI_1631.

This is an uncharacterized protein from Sinorhizobium fredii (strain NBRC 101917 / NGR234).